The chain runs to 461 residues: Kynureninase (461 aa).

Pyridoxal 5'-phosphate-binding positions include L114, T115, 142 to 145 (FPSD), D228, H231, and Y253. Position 254 is an N6-(pyridoxal phosphate)lysine (K254). Pyridoxal 5'-phosphate-binding residues include W288 and N316.

This sequence belongs to the kynureninase family. In terms of assembly, homodimer. Pyridoxal 5'-phosphate serves as cofactor.

It is found in the cytoplasm. The enzyme catalyses L-kynurenine + H2O = anthranilate + L-alanine + H(+). The catalysed reaction is 3-hydroxy-L-kynurenine + H2O = 3-hydroxyanthranilate + L-alanine + H(+). Its pathway is amino-acid degradation; L-kynurenine degradation; L-alanine and anthranilate from L-kynurenine: step 1/1. It participates in cofactor biosynthesis; NAD(+) biosynthesis; quinolinate from L-kynurenine: step 2/3. In terms of biological role, catalyzes the cleavage of L-kynurenine (L-Kyn) and L-3-hydroxykynurenine (L-3OHKyn) into anthranilic acid (AA) and 3-hydroxyanthranilic acid (3-OHAA), respectively. This is Kynureninase from Candida albicans (strain SC5314 / ATCC MYA-2876) (Yeast).